Consider the following 84-residue polypeptide: Delta-thalatoxin-Hhe1a (84 aa).

Residues 1–19 (MAYQKIVFVALMLVLAVSA) form the signal peptide. Residues 20-33 (MRLPDQQDQDISVA) constitute a propeptide that is removed on maturation. 3 disulfides stabilise this stretch: Cys38–Cys78, Cys40–Cys68, and Cys61–Cys79.

The protein belongs to the sea anemone sodium channel inhibitory toxin family. Type II subfamily.

The protein resides in the secreted. It is found in the nematocyst. Its function is as follows. Binds specifically to the voltage-gated sodium channel (Nav) and delays its inactivation. The sequence is that of Delta-thalatoxin-Hhe1a from Heterodactyla hemprichii (Hemprich's sea anemone).